The chain runs to 195 residues: Protein lin-28 homolog A (195 aa).

In terms of domain architecture, CSD spans 33–106; that stretch reads QGSGVCKWFN…GLESTQVTGP (74 aa). Residues 98 to 127 are disordered; that stretch reads LESTQVTGPGGAPCIGSERRPKVKGQQKRR. Positions 107 to 130 are flexible linker; sequence GGAPCIGSERRPKVKGQQKRRQRG. Positions 118 to 127 are enriched in basic residues; that stretch reads PKVKGQQKRR. CCHC-type zinc fingers lie at residues 131 to 148 and 153 to 170; these read DRCY…ECKL and KKCH…QCPE. Cysteine 133, cysteine 136, histidine 141, cysteine 146, cysteine 155, cysteine 158, histidine 163, and cysteine 168 together coordinate Zn(2+).

Belongs to the lin-28 family. In terms of assembly, monomer.

It is found in the cytoplasm. The protein resides in the rough endoplasmic reticulum. It localises to the P-body. Its subcellular location is the stress granule. The protein localises to the nucleus. It is found in the nucleolus. Its function is as follows. RNA-binding protein that inhibits processing of pre-let-7 miRNAs and regulates translation of mRNAs that control developmental timing, pluripotency and metabolism. Seems to recognize a common structural G-quartet (G4) feature in its miRNA and mRNA targets. 'Translational enhancer' that drives specific mRNAs to polysomes and increases the efficiency of protein synthesis. Its association with the translational machinery and target mRNAs results in an increased number of initiation events per molecule of mRNA and, indirectly, in mRNA stabilization. Suppressor of microRNA (miRNA) biogenesis, including that of let-7. Binds specific target miRNA precursors (pre-miRNAs), recognizing an 5'-GGAG-3' motif found in their terminal loop, and recruits uridylyltransferase. This results in the terminal uridylation of target pre-miRNAs. Uridylated pre-miRNAs fail to be processed by Dicer and undergo degradation. Localized to the periendoplasmic reticulum area, binds to a large number of spliced mRNAs and inhibits the translation of mRNAs destined for the ER, reducing the synthesis of transmembrane proteins, ER or Golgi lumen proteins, and secretory proteins. Binds to and enhances the translation of mRNAs for several metabolic enzymes, increasing glycolysis and oxidative phosphorylation. Which, with the let-7 repression may enhance tissue repair in adult tissue. This Xenopus laevis (African clawed frog) protein is Protein lin-28 homolog A (lin28a).